A 230-amino-acid chain; its full sequence is Ribonuclease HII (230 aa).

The RNase H type-2 domain maps to 28-217 (FRIAGIDEAG…VKEHLPSQPD (190 aa)). A divalent metal cation-binding residues include Asp-34, Glu-35, and Asp-126. Positions 211 to 230 (HLPSQPDCDTAGPSTGLFSF) are disordered.

The protein belongs to the RNase HII family. Requires Mn(2+) as cofactor. It depends on Mg(2+) as a cofactor.

It is found in the cytoplasm. It carries out the reaction Endonucleolytic cleavage to 5'-phosphomonoester.. Its function is as follows. Endonuclease that specifically degrades the RNA of RNA-DNA hybrids. The chain is Ribonuclease HII from Geobacter sp. (strain M21).